A 473-amino-acid polypeptide reads, in one-letter code: Flavin-dependent L-tryptophan oxidase RebO (473 aa).

The signal sequence occupies residues 1–21; sequence MSRGHKKITVLGAGVAGLVAA. Residues 15 to 16, 35 to 36, arginine 43, 61 to 64, glutamate 444, and 451 to 456 each bind FAD; these read VA, EG, GAMR, and AWIDGA.

It belongs to the flavin monoamine oxidase family. RebO subfamily. Homodimer. FAD is required as a cofactor.

The enzyme catalyses 7-chloro-L-tryptophan + O2 = 3-(7-chloroindol-3-yl)-2-iminopropanoate + H2O2. It catalyses the reaction L-tryptophan + O2 = 2-iminio-3-(indol-3-yl)propanoate + H2O2. Its function is as follows. Involved in the biosynthesis of the indolocarbazole antitumor agent rebeccamycin. It generates the imine form of 7-chloroindole 3-pyruvate (7Cl-IPA) from 7-chloro-L-tryptophan (7Cl-Trp), with concomitant two-electron reduction of O(2) to H(2)O(2). The enzyme is also active with L-tryptophan as substrate. This Lentzea aerocolonigenes (Lechevalieria aerocolonigenes) protein is Flavin-dependent L-tryptophan oxidase RebO (rebO).